The following is a 240-amino-acid chain: Probable septum site-determining protein MinC (240 aa).

It belongs to the MinC family. Interacts with MinD and FtsZ.

Functionally, cell division inhibitor that blocks the formation of polar Z ring septums. Rapidly oscillates between the poles of the cell to destabilize FtsZ filaments that have formed before they mature into polar Z rings. Prevents FtsZ polymerization. This Acinetobacter baumannii (strain ACICU) protein is Probable septum site-determining protein MinC.